Reading from the N-terminus, the 627-residue chain is Myelin-associated glycoprotein (627 aa).

A signal peptide spans 1–19 (MIFLATLPLFWIMISASRG). Residues 20 to 325 (GHWGAWMPST…RTVELSVMYA (306 aa)) are interaction with RTN4R and RTN4RL2. The Extracellular segment spans residues 20-516 (GHWGAWMPST…HRLMWAKIGP (497 aa)). Trp22 is a glycosylation site (C-linked (Man) tryptophan). An Ig-like V-type domain is found at 22–120 (WGAWMPSTIS…LGGKYYFRGD (99 aa)). Intrachain disulfides connect Cys37-Cys165, Cys42-Cys100, and Cys159-Cys217. 65 to 67 (YPK) provides a ligand contact to a ganglioside GT1b (d18:1(4E)). An N-linked (GlcNAc...) asparagine glycan is attached at Asn99. A ganglioside GT1b (d18:1(4E))-binding positions include Arg118 and 124-128 (YNQYT). 4 consecutive Ig-like C2-type domains span residues 139–237 (NTPN…LDVK), 241–325 (VIVE…VMYA), 327–412 (WKPT…VEFA), and 413–508 (PIIL…GAHR). N-linked (GlcNAc...) asparagine glycans are attached at residues Asn223 and Asn246. Cysteines 261 and 305 form a disulfide. N-linked (GlcNAc...) asparagine glycosylation is found at Asn315 and Asn332. Cys347 and Cys392 are oxidised to a cystine. Residue Asn406 is glycosylated (N-linked (GlcNAc...) asparagine). 2 disulfide bridges follow: Cys421–Cys430 and Cys432–Cys488. Residues Asn450 and Asn454 are each glycosylated (N-linked (GlcNAc...) asparagine). The helical transmembrane segment at 517–536 (VGAVVAFAILIAIVCYITQT) threads the bilayer. Cys531 carries the S-palmitoyl cysteine lipid modification. Residues 537–627 (RRKKNVTESS…LAEYAEIRVK (91 aa)) lie on the Cytoplasmic side of the membrane. Ser545, Ser547, Ser549, and Ser591 each carry phosphoserine. The segment at 578–627 (LGSERRLLGLRGESPELDLSYSHSDLGKRPTKDSYTLTEELAEYAEIRVK) is required for normal axon myelination in the central nervous system.

Belongs to the immunoglobulin superfamily. SIGLEC (sialic acid binding Ig-like lectin) family. In terms of assembly, monomer and homodimer. Interacts (via the first three N-terminal Ig-like domains) with RTN4R and RTN4RL2. Interacts with isoform 2 of BSG. N-glycosylated. In terms of processing, phosphorylated on tyrosine residues. Post-translationally, ubiquitinated, leading to proteasomal degradation. In terms of tissue distribution, detected in the myelin tract in brain, especially in the corpus callosum and in peripheral nerve. Expressed by myelinating glial cells in the central and peripheral nervous system. Detected in oligodendrocyte processes before formation of compact myelin. Restricted to the periaxonal space after myelination. Isoform S-MAG is the predominant isoform in CNS and PNS of the adult (at protein level).

Its subcellular location is the cell membrane. The protein localises to the membrane raft. Functionally, adhesion molecule that mediates interactions between myelinating cells and neurons by binding to neuronal sialic acid-containing gangliosides and to the glycoproteins RTN4R and RTN4RL2. Not required for initial myelination, but seems to play a role in the maintenance of normal axon myelination. Protects motoneurons against apoptosis, also after injury; protection against apoptosis is probably mediated via interaction with neuronal RTN4R and RTN4RL2. Required to prevent degeneration of myelinated axons in adults; this probably depends on binding to gangliosides on the axon cell membrane. Negative regulator of neurite outgrowth that inhibits axon longitudinal growth. Negative regulator of neurite outgrowth; in dorsal root ganglion neurons the inhibition is mediated primarily via binding to neuronal RTN4R or RTN4RL2 and to a lesser degree via binding to neuronal gangliosides. In cerebellar granule cells the inhibition is mediated via binding to neuronal gangliosides. In sensory neurons, inhibition of neurite extension depends only partially on RTN4R, RTN4RL2 and gangliosides. Inhibits axon outgrowth by binding to RTN4R. Preferentially binds to alpha-2,3-linked sialic acid. Binds ganglioside Gt1b. This chain is Myelin-associated glycoprotein (Mag), found in Mus musculus (Mouse).